Here is a 7059-residue protein sequence, read N- to C-terminus: Replicase polyprotein 1ab (7059 aa).

One can recognise a CoV Nsp1 globular domain in the interval 54–196 (PENHVMVDCR…PWVMYLRKCG (143 aa)). Residues 216–246 (FKVEDAYDLVHDEPKGKFSKKAYALIRGYRG) enclose the BetaCoV Nsp1 C-terminal domain. Positions 250 to 519 (LLYVDQYGCD…LICKALYLDY (270 aa)) constitute a CoV Nsp2 N-terminal domain. The Zn(2+) site is built by cysteine 392, cysteine 397, cysteine 413, and cysteine 416. The tract at residues 392–416 (CEQDLCDFKGWVPGNMIDGFACTTC) is C4. The CoV Nsp2 middle domain maps to 524 to 713 (CGNLHQRELL…AQAFRSGAKV (190 aa)). The CoV Nsp2 C-terminal domain occupies 733 to 851 (RRRICLSGSK…LDQAWRVPCA (119 aa)). The region spanning 853-966 (RCVTFKEQPT…LYCAFTAPED (114 aa)) is the Ubiquitin-like 1 domain. Acidic residues predominate over residues 972-986 (ESGVEEDDVEGEETD). Residues 972–1000 (ESGVEEDDVEGEETDLTVTSAGEPCVASE) form a disordered region. Positions 1036 to 1274 (DLESVIQDYE…IAQLYGSCIT (239 aa)) constitute a Peptidase C16 1 domain. The For PL1-PRO activity role is filled by cysteine 1074. Residues cysteine 1151, cysteine 1154, cysteine 1177, and cysteine 1179 each contribute to the Zn(2+) site. The C4-type 1 zinc finger occupies 1151–1179 (CIKCDLALKLKGLDAMFFYGDVVSHVCKC). Active-site for PL1-PRO activity residues include histidine 1225 and aspartate 1236. The Macro domain maps to 1275–1435 (PNVCFVKGDI…LISKCQITAV (161 aa)). A DPUP domain is found at 1491 to 1563 (DDARTFVQSN…VAQIKALFLD (73 aa)). A Ubiquitin-like 2 domain is found at 1562 to 1617 (LDKVDILLTVDGVNFTNRFVPVGESFGKSLGNVFCDGVNVTKHKCDINYKGKVFFQ). In terms of domain architecture, Peptidase C16 2 spans 1631–1892 (SSFNFDQKEL…KIEYKPDLSQ (262 aa)). The active-site For PL2-PRO activity is the cysteine 1671. Residues cysteine 1749, cysteine 1751, cysteine 1783, and cysteine 1785 each contribute to the Zn(2+) site. The C4-type 2 zinc-finger motif lies at 1749-1785 (CKCGVKQEQRTGVDAVMHFGTLSREDLEIGYTVDCSC). Residues histidine 1828 and aspartate 1842 each act as for PL2-PRO activity in the active site. One can recognise a Nucleic acid-binding domain in the interval 1906–2007 (IKAQFKTFEK…TYFNRPLLVD (102 aa)). In terms of domain architecture, G2M spans 2020 to 2169 (DDGGDISESD…ADNKVIYTTE (150 aa)). The next 3 helical transmembrane spans lie at 2138-2158 (ISAC…WIKI), 2199-2219 (ACII…NVIF), and 2221-2241 (DFYL…VQWI). The HD1 stretch occupies residues 2138–2385 (ISACFNFIKW…ASFIKLFSLF (248 aa)). The 3Ecto domain occupies 2235–2296 (GKIVQWIKNT…AIDVVQYEAD (62 aa)). Disulfide bonds link cysteine 2251–cysteine 2275 and cysteine 2266–cysteine 2272. Helical transmembrane passes span 2313–2333 (LIVS…LISI), 2343–2363 (LLML…ANML), and 2365–2385 (AHVF…FSLF). The interval 2383-2473 (SLFRHVAYGC…ELKRPIQPTD (91 aa)) is Y1. One can recognise a CoV Nsp3 Y domain in the interval 2383–2750 (SLFRHVAYGC…LTTPFSLKGG (368 aa)). Residues histidine 2387, cysteine 2392, cysteine 2397, cysteine 2400, cysteine 2433, histidine 2436, cysteine 2440, and cysteine 2443 each contribute to the Zn(2+) site. The ZF1 stretch occupies residues 2387 to 2400 (HVAYGCSKSGCLFC). The tract at residues 2433-2443 (CSKHQWNCIDC) is ZF2. A Y2 region spans residues 2474–2566 (VAYHTVTDVK…MVDKILITTA (93 aa)). The segment at 2474-2750 (VAYHTVTDVK…LTTPFSLKGG (277 aa)) is coV-Y. A Y3 region spans residues 2567 to 2649 (NTGTSVTETM…DSVMSAVSAG (83 aa)). Residues 2650 to 2750 (LELTDESCNN…LTTPFSLKGG (101 aa)) form a Y4 region. The next 7 helical transmembrane spans lie at 2752–2772 (VFSY…IGLW), 2824–2844 (STFG…VAVV), 3009–3029 (VFDL…FLAL), 3031–3051 (ASSI…YYLI), 3063–3083 (IVFV…VFQV), 3090–3110 (VYAI…SVIM), and 3115–3135 (LVMY…SVVV). The HD2 stretch occupies residues 2752–3135 (VFSYFVYVCF…FCLLYISVVV (384 aa)). A Nsp4C domain is found at 3149–3246 (LGTSVRSDGT…TASVSTSFLQ (98 aa)). A Peptidase C30 domain is found at 3247 to 3549 (SGIVKMVNPT…YQQLAGIKLQ (303 aa)). Active-site for 3CL-PRO activity residues include histidine 3287 and cysteine 3391. An HD3 region spans residues 3319–3775 (LSLTVMSYQM…IISCYWGLFS (457 aa)). Transmembrane regions (helical) follow at residues 3558–3578 (GIVC…TAFV), 3588–3608 (TNML…MLLV), 3615–3635 (LTMY…LVVY), 3657–3677 (TYTD…FVTL), 3684–3704 (LFSF…WYMG), 3711–3731 (ILLM…LSMA), and 3755–3775 (IVLV…GLFS). The region spanning 3837–3925 (SKLTDVKCAN…DYAKDNTVLQ (89 aa)) is the RdRp Nsp7 cofactor domain. A RdRp Nsp8 cofactor domain is found at 3926–4122 (ALQSEFVNMA…HNEVSATVLQ (197 aa)). The Nsp9 ssRNA-binding domain occupies 4123-4232 (NNELMPAKLK…GTISSTVRLQ (110 aa)). An ExoN/MTase coactivator domain is found at 4233–4370 (AGTATEYASN…CVSTDTTVQS (138 aa)). 8 residues coordinate Zn(2+): cysteine 4306, cysteine 4309, histidine 4315, cysteine 4322, cysteine 4348, cysteine 4351, cysteine 4359, and cysteine 4361. 2 zinc fingers span residues 4306–4322 (CIYC…DGLC) and 4348–4361 (CQVC…SCSC). A NiRAN domain is found at 4375 to 4630 (FLNRVRGTSV…DCELYVNNAY (256 aa)). Mn(2+)-binding residues include asparagine 4578 and aspartate 4587. In terms of domain architecture, Nsp12 Interface spans 4631 to 4729 (RLFDLVQYDF…MNMDVDTHRY (99 aa)). Zn(2+) contacts are provided by histidine 4660, cysteine 4666, cysteine 4671, cysteine 4675, and cysteine 4852. The region spanning 4730-5297 (RLSLKDLLLY…NMYLRSAVMQ (568 aa)) is the Nsp12 RNA-dependent RNA polymerase domain. The tract at residues 4732 to 4946 (SLKDLLLYAA…HQKCLKSIAA (215 aa)) is rdRp Fingers N-ter. The segment at 4947–4985 (TRGVPVVIGTTKFYGGWDDMLRRLIKDVDNPVLMGWDYP) is rdRp Palm N-ter. Positions 4977 to 5139 (PVLMGWDYPK…CYNSDYASKG (163 aa)) constitute a RdRp catalytic domain. The rdRp Fingers C-ter stretch occupies residues 4986-5044 (KCDRAMPNILRIVSSLVLARKHEACCSQSDRFYRLANECAQVLSEIVMCGGCYYVKPGG). Zn(2+) contacts are provided by histidine 5007, cysteine 5010, and cysteine 5011. A rdRp Palm C-ter region spans residues 5045–5180 (TSSGDATTAF…NNGPHEFCSQ (136 aa)). Residues serine 5124, aspartate 5125, and aspartate 5126 contribute to the active site. A rdRp Thumb region spans residues 5181–5297 (HTMLVKMDGD…NMYLRSAVMQ (117 aa)). Positions 5298–5410 (SVGACVVCSS…DDFNRIASCK (113 aa)) constitute a CV ZBD domain. Zn(2+) contacts are provided by cysteine 5302, cysteine 5305, cysteine 5313, cysteine 5316, cysteine 5323, cysteine 5326, histidine 5330, histidine 5336, cysteine 5347, cysteine 5352, cysteine 5369, and histidine 5372. The 182-residue stretch at 5553-5734 (SVLETFQNNV…MCCLGPDIFL (182 aa)) folds into the (+)RNA virus helicase ATP-binding domain. 5578-5585 (GPPGTGKS) provides a ligand contact to ATP. A (+)RNA virus helicase C-terminal domain is found at 5735–5904 (GTCYRCPKEI…VETRVQCSTN (170 aa)). An ExoN domain is found at 5971–6186 (LFITKEEAVK…RCLAVYDCFC (216 aa)). Active-site residues include aspartate 5989, glutamate 5991, and glutamate 6090. 3 residues coordinate Zn(2+): histidine 6156, cysteine 6160, and histidine 6163. Active-site residues include histidine 6167 and aspartate 6172. Cysteine 6178 lines the Zn(2+) pocket. In terms of domain architecture, N7-MTase spans 6195 to 6421 (YPIISNELSI…NLWNTFTKLQ (227 aa)). Residue 6230-6236 (DIGNPKA) coordinates S-adenosyl-L-methionine. Residues 6308–6322 (CNGGSLYVNKHAFHT) form a gpppA-binding region. Zn(2+) is bound by residues cysteine 6346, cysteine 6367, cysteine 6378, and histidine 6381. Positions 6422–6482 (SLENVVYNLV…NVAVELFAKR (61 aa)) constitute a Nsp15 N-terminal oligomerization domain. The AV-Nsp11N/CoV-Nsp15M domain occupies 6483–6603 (SIRHHPELKL…FAVRKEGQDV (121 aa)). Residues 6653-6792 (TCRTDMEKDF…NDEKVMTFYP (140 aa)) form the NendoU domain. Active-site residues include histidine 6683, histidine 6698, lysine 6738, lysine 6841, aspartate 6935, lysine 6971, and glutamate 7004. A Nidovirus-type SAM-dependent 2'-O-MTase domain is found at 6797–7059 (ASDWKPGYSM…NSRLSWLVMP (263 aa)).

This sequence belongs to the coronaviruses polyprotein 1ab family. As to quaternary structure, interacts with host PHB and PHB2. In terms of assembly, interacts with papain-like protease nsp3 and non-structural protein 6. Monomer. Homodimer. Only the homodimer shows catalytic activity. As to quaternary structure, interacts with nsp8 and nsp12 to form the replication-transcription complex (RTC): nsp12, nsp7, two subunits of nsp8, and up to two subunits of nsp13. In terms of assembly, interacts with nsp7, nsp13 and nsp12 to form the replication-transcription complex (RTC): nsp12, nsp7, two subunits of nsp8, and up to two subunits of nsp13. Interacts with nsp12. As to quaternary structure, interacts with proofreading exoribonuclease nsp14 and 2'-O-methyltransferase nsp16; these interactions enhance nsp14 and nsp16 enzymatic activities. In terms of assembly, interacts with nsp7 and nsp8 to form the replication-transcription complex (RTC): nsp12, nsp7, two subunits of nsp8, and up to two subunits of nsp13. Interacts with nsp9. Interacts with nsp8 to form the replication-transcription complex (RTC): nsp12, nsp7, two subunits of nsp8, and up to two subunits of nsp13. Requires Mn(2+) as cofactor. Mg(2+) is required as a cofactor. Post-translationally, specific enzymatic cleavages in vivo by its own proteases yield mature proteins. 3CL-PRO and PL-PRO proteinases are autocatalytically processed.

The protein resides in the host membrane. It is found in the host cytoplasm. The protein localises to the host perinuclear region. It localises to the host endoplasmic reticulum-Golgi intermediate compartment. It carries out the reaction RNA(n) + a ribonucleoside 5'-triphosphate = RNA(n+1) + diphosphate. It catalyses the reaction ATP + H2O = ADP + phosphate + H(+). The catalysed reaction is Thiol-dependent hydrolysis of ester, thioester, amide, peptide and isopeptide bonds formed by the C-terminal Gly of ubiquitin (a 76-residue protein attached to proteins as an intracellular targeting signal).. The enzyme catalyses a 5'-end (N(7)-methyl 5'-triphosphoguanosine)-ribonucleoside in mRNA + S-adenosyl-L-methionine = a 5'-end (N(7)-methyl 5'-triphosphoguanosine)-(2'-O-methyl-ribonucleoside) in mRNA + S-adenosyl-L-homocysteine + H(+). It carries out the reaction uridylyl-uridylyl-ribonucleotide-RNA = a 3'-end uridylyl-2',3'-cyclophospho-uridine-RNA + a 5'-end dephospho-ribonucleoside-RNA. It catalyses the reaction a 5'-end diphospho-ribonucleoside in mRNA + GTP + H(+) = a 5'-end (5'-triphosphoguanosine)-ribonucleoside in mRNA + diphosphate. The catalysed reaction is a 5'-end (5'-triphosphoguanosine)-ribonucleoside in mRNA + S-adenosyl-L-methionine = a 5'-end (N(7)-methyl 5'-triphosphoguanosine)-ribonucleoside in mRNA + S-adenosyl-L-homocysteine. Functionally, the replicase polyprotein of coronaviruses is a multifunctional protein: it contains the activities necessary for the transcription of negative stranded RNA, leader RNA, subgenomic mRNAs and progeny virion RNA as well as proteinases responsible for the cleavage of the polyprotein into functional products. Its function is as follows. Inhibits host translation by interacting with the 40S ribosomal subunit. The nsp1-40S ribosome complex further induces an endonucleolytic cleavage near the 5'UTR of host mRNAs, targeting them for degradation. Viral mRNAs are not susceptible to nsp1-mediated endonucleolytic RNA cleavage thanks to the presence of a 5'-end leader sequence and are therefore protected from degradation. By suppressing host gene expression, nsp1 facilitates efficient viral gene expression in infected cells and evasion from host immune response. In terms of biological role, may play a role in the modulation of host cell survival signaling pathway by interacting with host PHB and PHB2. Indeed, these two proteins play a role in maintaining the functional integrity of the mitochondria and protecting cells from various stresses. Responsible for the cleavages located at the N-terminus of the replicase polyprotein. In addition, PL-PRO possesses a deubiquitinating/deISGylating activity and processes both 'Lys-48'- and 'Lys-63'-linked polyubiquitin chains from cellular substrates. Participates together with nsp4 in the assembly of virally-induced cytoplasmic double-membrane vesicles necessary for viral replication. Antagonizes innate immune induction of type I interferon by blocking the phosphorylation, dimerization and subsequent nuclear translocation of host IRF3. Also prevents host NF-kappa-B signaling. Functionally, participates in the assembly of virally-induced cytoplasmic double-membrane vesicles necessary for viral replication. Its function is as follows. Cleaves the C-terminus of replicase polyprotein at 11 sites. Recognizes substrates containing the core sequence [ILMVF]-Q-|-[SGACN]. Also able to bind an ADP-ribose-1''-phosphate (ADRP). In terms of biological role, plays a role in the initial induction of autophagosomes from host endoplasmic reticulum. Later, limits the expansion of these phagosomes that are no longer able to deliver viral components to lysosomes. Forms a hexadecamer with nsp8 (8 subunits of each) that may participate in viral replication by acting as a primase. Alternatively, may synthesize substantially longer products than oligonucleotide primers. Functionally, forms a hexadecamer with nsp7 (8 subunits of each) that may participate in viral replication by acting as a primase. Alternatively, may synthesize substantially longer products than oligonucleotide primers. Its function is as follows. Forms a primer, NSP9-pU, which is utilized by the polymerase for the initiation of RNA chains. Interacts with ribosome signal recognition particle RNA (SRP). Together with NSP8, suppress protein integration into the cell membrane, thereby disrupting host immune defenses. In terms of biological role, plays a pivotal role in viral transcription by stimulating both nsp14 3'-5' exoribonuclease and nsp16 2'-O-methyltransferase activities. Therefore plays an essential role in viral mRNAs cap methylation. RNA-directed RNA polymerase that catalyzes the transcription of viral genomic and subgenomic RNAs. Acts in complex with nsp7 and nsp8 to transcribe both the minus and positive strands of genomic RNA. The kinase-like NiRAN domain of NSP12 attaches one or more nucleotides to the amino terminus of NSP9, forming a covalent RNA-protein intermediate that serves as transcription/replication primer. Subgenomic RNAs (sgRNAs) are formed by discontinuous transcription: The polymerase has the ability to pause at transcription-regulating sequences (TRS) and jump to the leader TRS, resulting in a major deletion. This creates a series of subgenomic RNAs that are replicated, transcribed and translated. In addition, Nsp12 is a subunit of the viral RNA capping enzyme that catalyzes the RNA guanylyltransferase reaction for genomic and sub-genomic RNAs. Subsequently, the NiRAN domain transfers RNA to GDP, and forms the core cap structure GpppA-RNA. Functionally, multi-functional protein with a zinc-binding domain in N-terminus displaying RNA and DNA duplex-unwinding activities with 5' to 3' polarity. Activity of helicase is dependent on magnesium. Its function is as follows. Plays a role in viral RNA synthesis through two distinct activities. The N7-guanine methyltransferase activity plays a role in the formation of the cap structure GpppA-RNA. The proofreading exoribonuclease reduces the sensitivity of the virus to RNA mutagens during replication. This activity acts on both ssRNA and dsRNA in a 3'-5' direction. In terms of biological role, plays a role in viral transcription/replication and prevents the simultaneous activation of host cell dsRNA sensors, such as MDA5/IFIH1, OAS, and PKR. Acts by degrading the 5'-polyuridines generated during replication of the poly(A) region of viral genomic and subgenomic RNAs. Catalyzes a two-step reaction in which a 2'3'-cyclic phosphate (2'3'-cP) is first generated by 2'-O transesterification, which is then hydrolyzed to a 3'-phosphate (3'-P). If not degraded, poly(U) RNA would hybridize with poly(A) RNA tails and activate host dsRNA sensors. Methyltransferase that mediates mRNA cap 2'-O-ribose methylation to the 5'-cap structure of viral mRNAs. N7-methyl guanosine cap is a prerequisite for binding of nsp16. Therefore plays an essential role in viral mRNAs cap methylation which is essential to evade immune system. The polypeptide is Replicase polyprotein 1ab (rep) (Bos taurus (Bovine)).